Consider the following 317-residue polypeptide: Beta-ketoacyl-[acyl-carrier-protein] synthase III (317 aa).

Residues Cys112 and His244 contribute to the active site. An ACP-binding region spans residues Gln245–Arg249. Residue Asn274 is part of the active site.

This sequence belongs to the thiolase-like superfamily. FabH family. As to quaternary structure, homodimer.

Its subcellular location is the cytoplasm. The catalysed reaction is malonyl-[ACP] + acetyl-CoA + H(+) = 3-oxobutanoyl-[ACP] + CO2 + CoA. It functions in the pathway lipid metabolism; fatty acid biosynthesis. Functionally, catalyzes the condensation reaction of fatty acid synthesis by the addition to an acyl acceptor of two carbons from malonyl-ACP. Catalyzes the first condensation reaction which initiates fatty acid synthesis and may therefore play a role in governing the total rate of fatty acid production. Possesses both acetoacetyl-ACP synthase and acetyl transacylase activities. Its substrate specificity determines the biosynthesis of branched-chain and/or straight-chain of fatty acids. This Shigella boydii serotype 4 (strain Sb227) protein is Beta-ketoacyl-[acyl-carrier-protein] synthase III.